The primary structure comprises 333 residues: Large ribosomal subunit protein mL44 (333 aa).

Residues 1–30 (MASAVFRLLQQGPRRLLAPAVPTLAPPVRG) constitute a mitochondrion transit peptide. The 143-residue stretch at 86 to 228 (DLLKTAFINS…LITQMTGKEL (143 aa)) folds into the RNase III domain. The region spanning 236 to 306 (NPMGLLVEEL…ARVALRKLYG (71 aa)) is the DRBM domain. Over residues 311 to 327 (RRPWDYSKPKESPKRAE) the composition is skewed to basic and acidic residues. The disordered stretch occupies residues 311–333 (RRPWDYSKPKESPKRAEQTSVAS).

This sequence belongs to the ribonuclease III family. Mitochondrion-specific ribosomal protein mL44 subfamily. In terms of assembly, component of the mitochondrial ribosome large subunit (39S) which comprises a 16S rRNA and about 50 distinct proteins.

The protein localises to the mitochondrion. Component of the 39S subunit of mitochondrial ribosome. May have a function in the assembly/stability of nascent mitochondrial polypeptides exiting the ribosome. The sequence is that of Large ribosomal subunit protein mL44 (Mrpl44) from Mus musculus (Mouse).